The primary structure comprises 147 residues: Sentan (147 aa).

A disordered region spans residues 14 to 34; it reads RLEGEPNPPAAPTSTLAPKNM. The segment covering 25 to 34 has biased composition (polar residues); that stretch reads PTSTLAPKNM.

It belongs to the S-100 family.

It localises to the cell projection. It is found in the cilium. In terms of biological role, may be a component of the linker structure that bridges the ciliary membrane and peripheral singlet microtubules. In Bos taurus (Bovine), this protein is Sentan (SNTN).